Reading from the N-terminus, the 474-residue chain is MSRLVVVSNRIAPPDEHAASAGGLAVGILGALKAAGGLWFGWSGETGNEDQPLKKVKKGNITWASFNLSEQDLDEYYNQFSNAVLWPAFHYRLDLVQFQRPAWDGYLRVNALLADKLLPLLQDDDIIWIHDYHLLPFAHELRKRGVNNRIGFFLHIPFPTPEIFNALPTYDTLLEQLCDYDLLGFQTENDRLAFLDCLSNLTRVTTRSAKSHTAWGKAFRTEVYPIGIEPKEIAKQAAGPLPPKLAQLKAELKNVQNIFSVERLDYSKGLPERFLAYEVLLEKYPQHHGKIRYTQIAPTSRGDVQAYQDIRHQLENEAGRINGKYGQLGWTPLYYLNQHFDRKLLMKIFRYSDVGLVTPLRDGMNLVAKEYVAAQDPANPGVLVLSQFAGAANELTSALIVNPYDRDEVAAALDRALTMSLAERISRHAEMLDVIVKNDINHWQECFISDLKQIVPRSAESQQRDKVATFPKLA.

Arg10 is a binding site for D-glucose 6-phosphate. A UDP-alpha-D-glucose-binding site is contributed by 22-23 (GG). Residues Tyr77 and Asp131 each coordinate D-glucose 6-phosphate. Residues Arg263 and Lys268 each contribute to the UDP-alpha-D-glucose site. Arg301 is a D-glucose 6-phosphate binding site. UDP-alpha-D-glucose contacts are provided by residues Phe340 and 366-370 (LVAKE).

The protein belongs to the glycosyltransferase 20 family. As to quaternary structure, homotetramer.

The enzyme catalyses D-glucose 6-phosphate + UDP-alpha-D-glucose = alpha,alpha-trehalose 6-phosphate + UDP + H(+). The protein operates within glycan biosynthesis; trehalose biosynthesis. In terms of biological role, probably involved in the osmoprotection via the biosynthesis of trehalose. Catalyzes the transfer of glucose from UDP-alpha-D-glucose (UDP-Glc) to D-glucose 6-phosphate (Glc-6-P) to form trehalose-6-phosphate. Acts with retention of the anomeric configuration of the UDP-sugar donor. The polypeptide is Trehalose-6-phosphate synthase (Escherichia coli O9:H4 (strain HS)).